Consider the following 134-residue polypeptide: ATP synthase epsilon chain, chloroplastic (134 aa).

This sequence belongs to the ATPase epsilon chain family. In terms of assembly, F-type ATPases have 2 components, CF(1) - the catalytic core - and CF(0) - the membrane proton channel. CF(1) has five subunits: alpha(3), beta(3), gamma(1), delta(1), epsilon(1). CF(0) has three main subunits: a, b and c.

It is found in the plastid. Its subcellular location is the chloroplast thylakoid membrane. Produces ATP from ADP in the presence of a proton gradient across the membrane. The chain is ATP synthase epsilon chain, chloroplastic from Phalaenopsis aphrodite subsp. formosana (Moth orchid).